Here is a 361-residue protein sequence, read N- to C-terminus: UDP-3-O-acylglucosamine N-acyltransferase (361 aa).

Catalysis depends on histidine 258, which acts as the Proton acceptor.

Belongs to the transferase hexapeptide repeat family. LpxD subfamily. In terms of assembly, homotrimer.

It catalyses the reaction a UDP-3-O-[(3R)-3-hydroxyacyl]-alpha-D-glucosamine + a (3R)-hydroxyacyl-[ACP] = a UDP-2-N,3-O-bis[(3R)-3-hydroxyacyl]-alpha-D-glucosamine + holo-[ACP] + H(+). It functions in the pathway bacterial outer membrane biogenesis; LPS lipid A biosynthesis. Functionally, catalyzes the N-acylation of UDP-3-O-acylglucosamine using 3-hydroxyacyl-ACP as the acyl donor. Is involved in the biosynthesis of lipid A, a phosphorylated glycolipid that anchors the lipopolysaccharide to the outer membrane of the cell. The sequence is that of UDP-3-O-acylglucosamine N-acyltransferase from Nitrobacter hamburgensis (strain DSM 10229 / NCIMB 13809 / X14).